A 580-amino-acid chain; its full sequence is 2-succinyl-5-enolpyruvyl-6-hydroxy-3-cyclohexene-1-carboxylate synthase (580 aa).

Belongs to the TPP enzyme family. MenD subfamily. In terms of assembly, homodimer. Mg(2+) is required as a cofactor. Mn(2+) serves as cofactor. The cofactor is thiamine diphosphate.

The catalysed reaction is isochorismate + 2-oxoglutarate + H(+) = 5-enolpyruvoyl-6-hydroxy-2-succinyl-cyclohex-3-ene-1-carboxylate + CO2. It functions in the pathway quinol/quinone metabolism; 1,4-dihydroxy-2-naphthoate biosynthesis; 1,4-dihydroxy-2-naphthoate from chorismate: step 2/7. Its pathway is quinol/quinone metabolism; menaquinone biosynthesis. Catalyzes the thiamine diphosphate-dependent decarboxylation of 2-oxoglutarate and the subsequent addition of the resulting succinic semialdehyde-thiamine pyrophosphate anion to isochorismate to yield 2-succinyl-5-enolpyruvyl-6-hydroxy-3-cyclohexene-1-carboxylate (SEPHCHC). The protein is 2-succinyl-5-enolpyruvyl-6-hydroxy-3-cyclohexene-1-carboxylate synthase of Listeria innocua serovar 6a (strain ATCC BAA-680 / CLIP 11262).